A 599-amino-acid chain; its full sequence is NADH-ubiquinone oxidoreductase chain 5 (599 aa).

The next 17 helical transmembrane spans lie at 1–21 (MALM…PLVF), 41–61 (FITS…IIIL), 79–99 (LDLY…SIME), 114–134 (FLNY…ANNM), 137–157 (LFIG…WWYG), 166–186 (LQAI…MAWF), 198–218 (IFSL…AAMG), 237–257 (TPVS…FLLI), 269–289 (IMTT…ICAL), 297–317 (IIAF…GINQ), 323–343 (LHIC…GSII), 362–382 (MPLT…TPFM), 400–420 (INSW…AYST), 453–473 (LMLG…PVNM), 478–498 (MPFT…IVAM), 509–529 (MYPN…PTII), and 578–598 (GMLK…MLIM).

The protein belongs to the complex I subunit 5 family.

Its subcellular location is the mitochondrion inner membrane. The catalysed reaction is a ubiquinone + NADH + 5 H(+)(in) = a ubiquinol + NAD(+) + 4 H(+)(out). Core subunit of the mitochondrial membrane respiratory chain NADH dehydrogenase (Complex I) that is believed to belong to the minimal assembly required for catalysis. Complex I functions in the transfer of electrons from NADH to the respiratory chain. The immediate electron acceptor for the enzyme is believed to be ubiquinone. The polypeptide is NADH-ubiquinone oxidoreductase chain 5 (ND5) (Geomys personatus (Texas pocket gopher)).